A 52-amino-acid chain; its full sequence is Conotoxin Ac4.3a (52 aa).

Positions 1–11 (SDFRNAAVHER) are excised as a propeptide. Residue Gln12 is modified to Pyrrolidone carboxylic acid. At Glu14 the chain carries 4-carboxyglutamate. Residues Thr18 and Thr20 are each glycosylated (O-linked (HexNAc...) threonine). Pro28, Pro33, and Pro47 each carry 4-hydroxyproline. A Proline amide modification is found at Pro47. Residues 48-52 (GRRND) constitute a propeptide that is removed on maturation.

This sequence belongs to the conotoxin A superfamily. Contains 3 disulfide bonds. As to expression, expressed by the venom duct.

It localises to the secreted. Its function is as follows. Probable neurotoxin with ion channel inhibitor activity. This chain is Conotoxin Ac4.3a, found in Conus achatinus (Little frog cone).